The primary structure comprises 445 residues: Protein trichome berefringence-like 7 (445 aa).

Residues 69–89 (IIAGTIVSFLVIIAGGYLYVV) traverse the membrane as a helical; Signal-anchor for type II membrane protein segment. The short motif at 188–190 (GDS) is the GDS motif element. A DCXHWCLPGXXDXWN motif motif is present at residues 418–432 (DCSHWCLPGVPDIWN).

Belongs to the PC-esterase family. TBL subfamily.

It is found in the membrane. In terms of biological role, may act as a bridging protein that binds pectin and other cell wall polysaccharides. Probably involved in maintaining esterification of pectins. May be involved in the specific O-acetylation of cell wall polymers. The polypeptide is Protein trichome berefringence-like 7 (TBL7) (Arabidopsis thaliana (Mouse-ear cress)).